A 362-amino-acid polypeptide reads, in one-letter code: Phosphoserine aminotransferase (362 aa).

L-glutamate is bound by residues serine 9 and arginine 42. Residues 76–77, tryptophan 102, threonine 153, aspartate 174, and glutamine 197 each bind pyridoxal 5'-phosphate; that span reads GR. N6-(pyridoxal phosphate)lysine is present on lysine 198. 239–240 lines the pyridoxal 5'-phosphate pocket; it reads NT.

It belongs to the class-V pyridoxal-phosphate-dependent aminotransferase family. SerC subfamily. As to quaternary structure, homodimer. Requires pyridoxal 5'-phosphate as cofactor.

It localises to the cytoplasm. The enzyme catalyses O-phospho-L-serine + 2-oxoglutarate = 3-phosphooxypyruvate + L-glutamate. It carries out the reaction 4-(phosphooxy)-L-threonine + 2-oxoglutarate = (R)-3-hydroxy-2-oxo-4-phosphooxybutanoate + L-glutamate. The protein operates within amino-acid biosynthesis; L-serine biosynthesis; L-serine from 3-phospho-D-glycerate: step 2/3. Its pathway is cofactor biosynthesis; pyridoxine 5'-phosphate biosynthesis; pyridoxine 5'-phosphate from D-erythrose 4-phosphate: step 3/5. Its function is as follows. Catalyzes the reversible conversion of 3-phosphohydroxypyruvate to phosphoserine and of 3-hydroxy-2-oxo-4-phosphonooxybutanoate to phosphohydroxythreonine. The polypeptide is Phosphoserine aminotransferase (Klebsiella pneumoniae (strain 342)).